Here is a 561-residue protein sequence, read N- to C-terminus: Septation ring formation regulator EzrA (561 aa).

At 1–3 (MWI) the chain is on the extracellular side. Residues 4–22 (VVFSLLVLTVTFFVYGALR) form a helical membrane-spanning segment. Over 23-561 (RKAFYKRVDK…VLEKVQHLAG (539 aa)) the chain is Cytoplasmic. Coiled-coil stretches lie at residues 98 to 130 (RFQK…IQVL), 166 to 214 (AKVF…HLLK), and 251 to 465 (FAID…KLSD).

This sequence belongs to the EzrA family.

Its subcellular location is the cell membrane. Negative regulator of FtsZ ring formation; modulates the frequency and position of FtsZ ring formation. Inhibits FtsZ ring formation at polar sites. Interacts either with FtsZ or with one of its binding partners to promote depolymerization. In Halalkalibacterium halodurans (strain ATCC BAA-125 / DSM 18197 / FERM 7344 / JCM 9153 / C-125) (Bacillus halodurans), this protein is Septation ring formation regulator EzrA.